The chain runs to 1249 residues: Myosin-1 (1249 aa).

The segment at 1–40 is disordered; it reads MGHSRRPAGGEKKSRFGRSKAAADVGDGRQAGGKPQVRKA. The 680-residue stretch at 50–729 folds into the Myosin motor domain; that stretch reads IGVSDLTLLS…TLFALEAMRD (680 aa). Residue 143 to 150 coordinates ATP; sequence GESGAGKT. Serine 371 is modified (phosphoserine). Positions 418–500 are actin-binding; the sequence is SIGILDIYGF…PGVFAALNDA (83 aa). 2 consecutive IQ domains span residues 733 to 753 and 754 to 779; these read HNMAIRIQRAWRNYLRYRTEC and AIRIQRFWRRMNGGLELLKLRDQGHT. In terms of domain architecture, TH1 spans 787–979; sequence RRRMSILGSR…PGEPPNSVSK (193 aa). 2 disordered regions span residues 959–1081 and 1127–1249; these read DSYK…KAKA and EAYL…DDDW. Composition is skewed to low complexity over residues 1026–1035 and 1043–1061; these read PQTAAAQPTP and PVAAVAASHSRTSSTASAR. A compositionally biased stretch (pro residues) spans 1062 to 1073; that stretch reads APPPPPPAPPAA. The 62-residue stretch at 1074–1135 folds into the SH3 domain; that stretch reads AGPKKAKALY…PEAYLEEQVA (62 aa). The segment covering 1137–1149 has biased composition (pro residues); the sequence is TPKPAPPPPPPVA. Over residues 1150 to 1170 the composition is skewed to low complexity; the sequence is PRASPAPVNGSAAVAAAKAKA. Over residues 1199 to 1221 the composition is skewed to polar residues; that stretch reads VSMNSQGDSSGASGRGTPSSVSN. The span at 1222–1235 shows a compositional bias: low complexity; it reads ASLAGGLAEALRAR.

This sequence belongs to the TRAFAC class myosin-kinesin ATPase superfamily. Myosin family. Interacts (via IQ domains) with camA. In terms of processing, phosphorylation of the TEDS site (Ser-371) is required for the polarization of the actin cytoskeleton. Phosphorylation probably activates the myosin-I ATPase activity.

The protein resides in the cytoplasm. It localises to the cytoskeleton. The protein localises to the actin patch. Type-I myosin implicated in the organization of the actin cytoskeleton. Required for proper actin cytoskeleton polarization. At the cell cortex, assembles in patch-like structures together with proteins from the actin-polymerizing machinery and promotes actin assembly. Functions as actin nucleation-promoting factor (NPF) for the Arp2/3 complex. Plays an important role in polarized growth, spore germination, hyphal morphogenesis, and septal wall formation. The polypeptide is Myosin-1 (myoA) (Emericella nidulans (strain FGSC A4 / ATCC 38163 / CBS 112.46 / NRRL 194 / M139) (Aspergillus nidulans)).